We begin with the raw amino-acid sequence, 335 residues long: Ig gamma-2A chain C region secreted form (335 aa).

Ig-like domains are found at residues 6–98 (PSVY…KKIE), 126–225 (PSVF…KTIS), and 234–330 (PQVY…KTIS). A glycan (N-linked (GlcNAc...) asparagine) is linked at Asn-185.

The protein localises to the secreted. The chain is Ig gamma-2A chain C region secreted form from Mus musculus (Mouse).